We begin with the raw amino-acid sequence, 255 residues long: Type III pantothenate kinase (255 aa).

6–13 (DIGNTNTV) lines the ATP pocket. Residues tyrosine 100 and 107-110 (GADR) contribute to the substrate site. The Proton acceptor role is filled by aspartate 109. Aspartate 129 is a binding site for K(+). Threonine 132 is an ATP binding site. Residue threonine 185 coordinates substrate.

Belongs to the type III pantothenate kinase family. Homodimer. The cofactor is NH4(+). Requires K(+) as cofactor.

It localises to the cytoplasm. The enzyme catalyses (R)-pantothenate + ATP = (R)-4'-phosphopantothenate + ADP + H(+). It participates in cofactor biosynthesis; coenzyme A biosynthesis; CoA from (R)-pantothenate: step 1/5. Functionally, catalyzes the phosphorylation of pantothenate (Pan), the first step in CoA biosynthesis. The sequence is that of Type III pantothenate kinase from Desulfosudis oleivorans (strain DSM 6200 / JCM 39069 / Hxd3) (Desulfococcus oleovorans).